A 537-amino-acid chain; its full sequence is O-phosphoserine--tRNA(Cys) ligase (537 aa).

Residues 186 to 188 (HMT), 231 to 233 (SAS), 273 to 274 (YY), and N317 each bind substrate.

The protein belongs to the class-II aminoacyl-tRNA synthetase family. O-phosphoseryl-tRNA(Cys) synthetase subfamily. In terms of assembly, homotetramer. Interacts with SepCysS.

It catalyses the reaction tRNA(Cys) + O-phospho-L-serine + ATP = O-phospho-L-seryl-tRNA(Cys) + AMP + diphosphate. Functionally, catalyzes the attachment of O-phosphoserine (Sep) to tRNA(Cys). This is O-phosphoserine--tRNA(Cys) ligase from Methanococcus maripaludis (strain C7 / ATCC BAA-1331).